Here is a 1165-residue protein sequence, read N- to C-terminus: MHLKCLEIERFKSFGPYTRIPLLEGFTVVSGPNGSGKSNIIDALLFALGLSTSRGMRAEKLSDLIHQGAAKGEVAVTVTFALDAAAGGGELTVCRRLKVNGPNSTSSYQLNGSPCTLTDLHEELARHHIYPEGYNVVLQGDVTGIIAMPARERREIIDELAGVAEFDRKIEAARRELGEVEVRSDRIQAVVSELLEQMERLQKERAKAEEYRKLRAELGELALWEHLLSVRSLEAQIAQITSQLAAAEAVLAGFDREAEALAERCEQALDELDTANTRVKAMGENEQVALRTQMASVQAQRAQAEAALADLAQQQRQAQGRQQQLELELGELALTLTGFSRRQQDQQALVAQWTARLESDRQVLETSRNDLEQLSASSRRWVEEQSQLRRRLDQLQSEHDPLQRTLDRLGDRLVQATGEGERHREELARIEAGHAQLATEAKVAQERLAAARTRLEQTRADLEAERAQILADRTTQRRLEKERTEKARELDRLETQRQVWREAEGSRATQEVLGSGIQGVHGLISQLGRVEAQYQGALEVAAGNRLNNVVVEDDAVAAQAIELLKSRRAGRATFLPLNKLRSGRYLERLHEEGAIGYALDLIEFDRRYEAAFVQVFGDTVVFRSLELARRQLGRYRMVTMAGELLEKSGAMTGGSLDARRGGSGFALSEPPELAEMRARLGDLDRLLATLAERLERREQRAHELQSAAEAAQRELVAIENRAEQLGREHSTQQARATQLRVFLDSCQVGLEADRQEQADLAARLGPLREQIVQVREELAKLEQSDNHHRWQQSQQHLRELETEVRRWELQLRHAEADLQKSHLDEQLAQEKRQNLLSRRLDWEDQKVEFGQREEESRTRLAEFDRVIAELAAQVAELEERLVDIKRERDRLEAHGRALQQRQGQLNLQREQERLHQGQRAAALAAAQERLDELGPPAEDVPPPPEDLSLEQLQATRLRKQRRLEALEPVNMLAIEEYDRTAERQGELSEKLATLQRERSELLLRIEDCDTLKRSAFMQAFDAVNTHFQSLFAELSDGDGHLALEDPDNPFAGGLTLVAHPRGKQVRRLEAMSGGEKSLTALSFIFALQRYRPSPFYAFDEVDMFLDGANVERLAKMVRQQANSTQFLVVSLRRPMIERADRAIGVTLARAGHSQVLGVKLAADAS.

32 to 39 (PNGSGKSN) contacts ATP. A coiled-coil region spans residues 161 to 503 (AGVAEFDRKI…ETQRQVWREA (343 aa)). An SMC hinge domain is found at 518–630 (QGVHGLISQL…VFRSLELARR (113 aa)). Coiled coils occupy residues 672-901 (ELAE…LQQR) and 946-1010 (DLSL…DCDT).

It belongs to the SMC family. As to quaternary structure, homodimer.

It localises to the cytoplasm. In terms of biological role, required for chromosome condensation and partitioning. The sequence is that of Chromosome partition protein Smc from Gloeobacter violaceus (strain ATCC 29082 / PCC 7421).